Reading from the N-terminus, the 359-residue chain is Probable isoaspartyl peptidase/L-asparaginase 3 (359 aa).

The active-site Nucleophile is the T224. Substrate contacts are provided by residues 252-255 (RVGD) and 275-278 (TGDG).

Belongs to the Ntn-hydrolase family. Heterotetramer of two alpha and two beta chains arranged as a dimer of alpha/beta heterodimers. Post-translationally, cleaved into an alpha and beta chain by autocatalysis; this activates the enzyme. The N-terminal residue of the beta subunit is responsible for the nucleophile hydrolase activity.

It carries out the reaction Cleavage of a beta-linked Asp residue from the N-terminus of a polypeptide.. Its function is as follows. Acts in asparagine catabolism but also in the final steps of protein degradation via hydrolysis of a range of isoaspartyl dipeptides. In Arabidopsis thaliana (Mouse-ear cress), this protein is Probable isoaspartyl peptidase/L-asparaginase 3.